A 369-amino-acid chain; its full sequence is Glutamate 5-kinase (369 aa).

Lys-10 contacts ATP. Residues Ser-50, Asp-137, and Asn-149 each coordinate substrate. Residues 169–170 and 210–216 contribute to the ATP site; these read TD and TGGMVTK. A PUA domain is found at 276–349; it reads EGSIFIDEGA…GKHSEEMLAT (74 aa).

The protein belongs to the glutamate 5-kinase family.

The protein resides in the cytoplasm. It carries out the reaction L-glutamate + ATP = L-glutamyl 5-phosphate + ADP. Its pathway is amino-acid biosynthesis; L-proline biosynthesis; L-glutamate 5-semialdehyde from L-glutamate: step 1/2. In terms of biological role, catalyzes the transfer of a phosphate group to glutamate to form L-glutamate 5-phosphate. The chain is Glutamate 5-kinase from Desulfitobacterium hafniense (strain Y51).